A 278-amino-acid chain; its full sequence is Myb/SANT-like DNA-binding domain-containing protein 1 (278 aa).

One can recognise a Myb-like domain in the interval Arg-44–Ile-131. Positions Cys-139–Thr-167 are disordered. The segment covering Pro-149–Ser-166 has biased composition (polar residues).

The protein is Myb/SANT-like DNA-binding domain-containing protein 1 (Msantd1) of Mus musculus (Mouse).